Reading from the N-terminus, the 152-residue chain is Ribosome maturation factor RimP (152 aa).

The protein belongs to the RimP family.

Its subcellular location is the cytoplasm. Required for maturation of 30S ribosomal subunits. The sequence is that of Ribosome maturation factor RimP from Shigella boydii serotype 4 (strain Sb227).